Consider the following 122-residue polypeptide: UPF0102 protein XOO3839 (122 aa).

Belongs to the UPF0102 family.

This chain is UPF0102 protein XOO3839, found in Xanthomonas oryzae pv. oryzae (strain KACC10331 / KXO85).